A 603-amino-acid polypeptide reads, in one-letter code: Aspartate--tRNA(Asp/Asn) ligase (603 aa).

Position 187 (E187) interacts with L-aspartate. Residues 211–214 (QQFK) form an aspartate region. L-aspartate is bound by residues R233 and H461. Position 233–235 (233–235 (RDE)) interacts with ATP. E495 provides a ligand contact to ATP. L-aspartate is bound at residue R502. 547–550 (GLDR) serves as a coordination point for ATP.

Belongs to the class-II aminoacyl-tRNA synthetase family. Type 1 subfamily. As to quaternary structure, homodimer.

It localises to the cytoplasm. It carries out the reaction tRNA(Asx) + L-aspartate + ATP = L-aspartyl-tRNA(Asx) + AMP + diphosphate. Its function is as follows. Aspartyl-tRNA synthetase with relaxed tRNA specificity since it is able to aspartylate not only its cognate tRNA(Asp) but also tRNA(Asn). Reaction proceeds in two steps: L-aspartate is first activated by ATP to form Asp-AMP and then transferred to the acceptor end of tRNA(Asp/Asn). This chain is Aspartate--tRNA(Asp/Asn) ligase, found in Chlorobaculum parvum (strain DSM 263 / NCIMB 8327) (Chlorobium vibrioforme subsp. thiosulfatophilum).